We begin with the raw amino-acid sequence, 289 residues long: MEWSLTQDKLLAFHRLMRTDKPIGALLLLWPTLWALWVAAPGLPPLWILAVFVAGVWLMRAAGCVVNDYADRKFDGHVKRTANRPLPSGQVSEKEARTLFVVLVVLAFLLVLTLNTMTILLSVAALALAWVYPFMKRYTHLPQVVLGAAFGWSIPMAFAAVSESVPLSCWLMFLANILWAVAYDTQYAMVDRDDDLKIGIKSTAILFGRHDKLIIGILQVAVLALMVVIGRLNGLNWEFYWSVLVAGLLFAYQQKLIVRRDREACFKAFLNNNYVGLVLFLGLAMSYWS.

7 helical membrane passes run 33 to 53 (LWAL…AVFV), 99 to 119 (LFVV…TMTI), 141 to 161 (LPQV…FAAV), 163 to 183 (ESVP…AVAY), 213 to 233 (LIIG…GRLN), 238 to 258 (EFYW…KLIV), and 268 to 288 (AFLN…MSYW).

The protein belongs to the UbiA prenyltransferase family. It depends on Mg(2+) as a cofactor.

The protein resides in the cell inner membrane. It carries out the reaction all-trans-octaprenyl diphosphate + 4-hydroxybenzoate = 4-hydroxy-3-(all-trans-octaprenyl)benzoate + diphosphate. Its pathway is cofactor biosynthesis; ubiquinone biosynthesis. Catalyzes the prenylation of para-hydroxybenzoate (PHB) with an all-trans polyprenyl group. Mediates the second step in the final reaction sequence of ubiquinone-8 (UQ-8) biosynthesis, which is the condensation of the polyisoprenoid side chain with PHB, generating the first membrane-bound Q intermediate 3-octaprenyl-4-hydroxybenzoate. This Enterobacter sp. (strain 638) protein is 4-hydroxybenzoate octaprenyltransferase.